The following is a 105-amino-acid chain: MFAVIKTGGKQYRVAANDVLTIEKLEVVAGDTVEFTEVLVIGEGADAAIGAPFVKGASVKAEVVEHNRGKKVIAFKKRRRQNSKRSRGHRQHHTVVRITDIVAAK.

It belongs to the bacterial ribosomal protein bL21 family. In terms of assembly, part of the 50S ribosomal subunit. Contacts protein L20.

Functionally, this protein binds to 23S rRNA in the presence of protein L20. The protein is Large ribosomal subunit protein bL21 of Rhizobium rhizogenes (strain K84 / ATCC BAA-868) (Agrobacterium radiobacter).